A 473-amino-acid chain; its full sequence is ATP synthase subunit beta 2 (473 aa).

158 to 165 (GGAGVGKT) contacts ATP.

It belongs to the ATPase alpha/beta chains family. As to quaternary structure, F-type ATPases have 2 components, CF(1) - the catalytic core - and CF(0) - the membrane proton channel. CF(1) has five subunits: alpha(3), beta(3), gamma(1), delta(1), epsilon(1). CF(0) has three main subunits: a(1), b(2) and c(9-12). The alpha and beta chains form an alternating ring which encloses part of the gamma chain. CF(1) is attached to CF(0) by a central stalk formed by the gamma and epsilon chains, while a peripheral stalk is formed by the delta and b chains.

The protein localises to the cell membrane. It catalyses the reaction ATP + H2O + 4 H(+)(in) = ADP + phosphate + 5 H(+)(out). In terms of biological role, produces ATP from ADP in the presence of a proton gradient across the membrane. The catalytic sites are hosted primarily by the beta subunits. This is ATP synthase subunit beta 2 from Listeria welshimeri serovar 6b (strain ATCC 35897 / DSM 20650 / CCUG 15529 / CIP 8149 / NCTC 11857 / SLCC 5334 / V8).